Here is an 839-residue protein sequence, read N- to C-terminus: Transient receptor potential cation channel subfamily V member 1 (839 aa).

The segment covering 1-13 (MKKRASVDSKESE) has biased composition (basic and acidic residues). Disordered stretches follow at residues 1 to 59 (MKKR…LEES) and 82 to 107 (VVTS…PTSA). Topologically, residues 1–433 (MKKRASVDSK…LQDKWDRFVK (433 aa)) are cytoplasmic. A compositionally biased stretch (polar residues) spans 92–105 (PTSTRQLTQDSIPT). One copy of the ANK 1 repeat lies at 111 to 139 (LKLYDRRSIFDAVAQNNCQDLDSLLPFLQ). Residue arginine 117 participates in ATP binding. Residue serine 118 is modified to Phosphoserine; by PKA and PKD. At threonine 146 the chain carries Phosphothreonine; by PKA; in vitro. ANK repeat units follow at residues 154 to 187 (ETGK…QTNS), 204 to 229 (QTAL…GADV), 250 to 277 (GELP…WQPA), 286 to 322 (GNTV…AKLY), and 336 to 359 (FTPL…QREI). ATP is bound by residues lysine 157, lysine 162, asparagine 166, 201–204 (YRGQ), and 212–213 (ER). The residue at position 372 (threonine 372) is a Phosphothreonine; by PKA; in vitro. One copy of the ANK 7 repeat lies at 394–416 (KNSVLEVIAYSSSETPNRHDMLL). Residues 434–455 (RIFYFNFFIYCLYMIIFTMAAY) form a helical membrane-spanning segment. Residues 456–472 (YRPVDGLPPYKMKNTVG) lie on the Extracellular side of the membrane. A helical membrane pass occupies residues 473-497 (DYFRVTGEILSVIGGFHFFFRGIQY). Residues 498-510 (FLQRRPSVKTLFV) are Cytoplasmic-facing. Serine 504 bears the Phosphoserine; by PKC/PRKCE mark. Residues 511-532 (DSYSEILFFVQSLFLLASVVLY) form a helical membrane-spanning segment. 513 to 514 (YS) lines the resiniferatoxin pocket. Topologically, residues 533–535 (FSH) are extracellular. Residues 536 to 556 (RKEYVACMVFSLALGWTNMLY) traverse the membrane as a helical segment. Threonine 552 and arginine 559 together coordinate resiniferatoxin. Over 557 to 559 (YTR) the chain is Cytoplasmic. Residues 560–598 (GFQQMGIYAVMIEKMILRDLCRFMFVYLVFLFGFSTAVV) traverse the membrane as a helical segment. At 599 to 630 (TLIEDGKNESLSAEPHRWRGPGCRSAKNSYNS) the chain is on the extracellular side. Residue asparagine 606 is glycosylated (N-linked (GlcNAc...) asparagine). Residues 631-652 (LYSTCLELFKFTIGMGDLEFTE) constitute an intramembrane region (pore-forming). Glycine 644 is a Na(+) binding site. The short motif at 644–647 (GMGD) is the Selectivity filter element. Aspartate 647 is a binding site for Ca(2+). Residues 653–656 (NYDF) are Extracellular-facing. Residues 657-683 (KAVFIILLLAYVILTYILLLNMLIALM) traverse the membrane as a helical segment. The Cytoplasmic portion of the chain corresponds to 684–839 (GETVNKIAQE…FKDSAVPGEK (156 aa)). Positions 685-713 (ETVNKIAQESKNIWKLQRAITILDTEKSF) are AD. Position 705 is a phosphothreonine (threonine 705). The segment at 768 to 802 (EGVKRTLSFSLRSGRVSGRNWKNFALVPLLRDAST) is interaction with calmodulin. Serine 775 is modified (phosphoserine). The tract at residues 778 to 793 (LRSGRVSGRNWKNFAL) is required for PIP2-mediated channel inhibition. Serine 801 carries the post-translational modification Phosphoserine; by PKC/PRKCE and PKC/PRKCZ. Serine 821 carries the phosphoserine modification.

The protein belongs to the transient receptor (TC 1.A.4) family. TrpV subfamily. TRPV1 sub-subfamily. As to quaternary structure, homotetramer. Interacts with PIRT. May also form a heteromeric channel with TRPV3. Interacts with CALM, PRKCM and CSK. Interacts with PRKCG and NTRK1, probably by forming a trimeric complex. Interacts with the Scolopendra mutilans RhTx toxin. Interacts with TMEM100. Interacts with PACS2. Post-translationally, phosphorylation by PKA reverses capsaicin-induced dephosphorylation at multiple sites, probably including Ser-118 as a major phosphorylation site. Phosphorylation by CAMKII seems to regulate binding to vanilloids. Phosphorylated and modulated by PRKCE, PRKCM and probably PRKCZ. Dephosphorylation by calcineurin seems to lead to receptor desensitization and phosphorylation by CAMKII recovers activity.

It localises to the postsynaptic cell membrane. Its subcellular location is the cell projection. The protein localises to the dendritic spine membrane. The protein resides in the cell membrane. It carries out the reaction Ca(2+)(in) = Ca(2+)(out). The enzyme catalyses Mg(2+)(in) = Mg(2+)(out). It catalyses the reaction Na(+)(in) = Na(+)(out). The catalysed reaction is K(+)(in) = K(+)(out). Its activity is regulated as follows. Channel activity is activated via the interaction with PIRT and phosphatidylinositol 4,5-bisphosphate (PIP2). Both PIRT and PIP2 are required to activate channel activity. The channel is sensitized by ATP binding. Repeated stimulation with capsaicin gives rise to progressively smaller responses, due to desensitization. This desensitization is triggered by the influx of calcium ions and is inhibited by elevated ATP levels. Ca(2+) and CALM displace ATP from its binding site and trigger a conformation change that leads to a closed, desensitized channel. Intracellular PIP2 inhibits desensitization. The double-knot toxin (DkTx) from the Chinese earth tiger tarantula activates the channel and traps it in an open conformation. The Scolopendra mutilans RhTx toxin potentiates the heat activation pathway mediated by this channel by binding to the charge-rich outer pore region (in an activated state). Its function is as follows. Non-selective calcium permeant cation channel involved in detection of noxious chemical and thermal stimuli. Seems to mediate proton influx and may be involved in intracellular acidosis in nociceptive neurons. Involved in mediation of inflammatory pain and hyperalgesia. Sensitized by a phosphatidylinositol second messenger system activated by receptor tyrosine kinases, which involves PKC isozymes and PCL. Activation by vanilloids, like capsaicin, and temperatures higher than 42 degrees Celsius. Upon activation, exhibits a time- and Ca(2+)-dependent outward rectification, followed by a long-lasting refractory state. Mild extracellular acidic pH (6.5) potentiates channel activation by noxious heat and vanilloids, whereas acidic conditions (pH &lt;6) directly activate the channel. Can be activated by endogenous compounds, including 12-hydroperoxytetraenoic acid and bradykinin. Acts as ionotropic endocannabinoid receptor with central neuromodulatory effects. Triggers a form of long-term depression (TRPV1-LTD) mediated by the endocannabinoid anandamine in the hippocampus and nucleus accumbens by affecting AMPA receptors endocytosis. The protein is Transient receptor potential cation channel subfamily V member 1 (Trpv1) of Cavia porcellus (Guinea pig).